The primary structure comprises 461 residues: Putative transcription initiation factor IIB-like protein (461 aa).

The tract at residues 113-142 (SESLENIQSENSENNDNFTDNNTKKSPTKS) is disordered. Over residues 121–137 (SENSENNDNFTDNNTKK) the composition is skewed to low complexity. The TFIIB-type zinc-finger motif lies at 141–173 (KSRICSGCGSKGTLLEDQSSSVLVCSECGMIND). Zn(2+) is bound by residues cysteine 145, cysteine 165, and cysteine 168. 2 consecutive repeat copies span residues 246 to 327 (ISTI…EKKV) and 360 to 430 (IRRH…DVTI).

Belongs to the TFIIB family.

The sequence is that of Putative transcription initiation factor IIB-like protein from Acanthamoeba polyphaga mimivirus (APMV).